Reading from the N-terminus, the 303-residue chain is Acetyl-coenzyme A carboxylase carboxyl transferase subunit beta (303 aa).

Residues 25 to 294 (LWIKCPETGE…NDVSAKSLNG (270 aa)) form the CoA carboxyltransferase N-terminal domain.

The protein belongs to the AccD/PCCB family. As to quaternary structure, acetyl-CoA carboxylase is a heterohexamer composed of biotin carboxyl carrier protein (AccB), biotin carboxylase (AccC) and two subunits each of ACCase subunit alpha (AccA) and ACCase subunit beta (AccD).

It is found in the cytoplasm. The catalysed reaction is N(6)-carboxybiotinyl-L-lysyl-[protein] + acetyl-CoA = N(6)-biotinyl-L-lysyl-[protein] + malonyl-CoA. The protein operates within lipid metabolism; malonyl-CoA biosynthesis; malonyl-CoA from acetyl-CoA: step 1/1. Its function is as follows. Component of the acetyl coenzyme A carboxylase (ACC) complex. Biotin carboxylase (BC) catalyzes the carboxylation of biotin on its carrier protein (BCCP) and then the CO(2) group is transferred by the transcarboxylase to acetyl-CoA to form malonyl-CoA. This is Acetyl-coenzyme A carboxylase carboxyl transferase subunit beta from Rhizobium rhizogenes (strain K84 / ATCC BAA-868) (Agrobacterium radiobacter).